Consider the following 165-residue polypeptide: Type 3 secretion system regulator YopR (165 aa).

The tract at residues 2–11 is 5' secretion signal; that stretch reads TVTLNRGSIT. The tract at residues 131–149 is 3' secretion signal; the sequence is PYLSELINKELMILLPYNS.

This sequence belongs to the YopR family.

It is found in the secreted. Its function is as follows. May be involved in the regulation of the assembly of the type III secretion system (T3SS), also called injectisome, which is used to inject bacterial effector proteins into eukaryotic host cells. May control the secretion and/or polymerization of YscF/SctF, the principal component of the needle filament, thereby impacting the assembly of the T3SS. Involved in pathogenesis. Essential for the establishment of Yersinia infections in a mouse model system. This chain is Type 3 secretion system regulator YopR, found in Yersinia enterocolitica.